A 180-amino-acid chain; its full sequence is Large ribosomal subunit protein uL22 (180 aa).

2 disordered regions span residues 1–20 (MTKP…CKSR) and 160–180 (PKPA…EISA). The span at 8 to 20 (KTPSNPEKSCKSR) shows a compositional bias: polar residues.

Belongs to the universal ribosomal protein uL22 family.

This is Large ribosomal subunit protein uL22 (rpl17) from Dictyostelium discoideum (Social amoeba).